The following is a 447-amino-acid chain: Tubulin beta-1 chain (447 aa).

Gln-11 is a binding site for GTP. Residue Ser-40 is modified to Phosphoserine. The GTP site is built by Glu-69, Ser-138, Gly-142, Thr-143, Gly-144, Asn-204, and Asn-226. Glu-69 contacts Mg(2+). At Ser-339 the chain carries Phosphoserine. Positions 427–447 are disordered; sequence EATADEDAEFEEEQEAEVDEN. A compositionally biased stretch (acidic residues) spans 429-447; that stretch reads TADEDAEFEEEQEAEVDEN.

The protein belongs to the tubulin family. In terms of assembly, dimer of alpha and beta chains. A typical microtubule is a hollow water-filled tube with an outer diameter of 25 nm and an inner diameter of 15 nM. Alpha-beta heterodimers associate head-to-tail to form protofilaments running lengthwise along the microtubule wall with the beta-tubulin subunit facing the microtubule plus end conferring a structural polarity. Microtubules usually have 13 protofilaments but different protofilament numbers can be found in some organisms and specialized cells. Interacts with mgr and Vhl. Mg(2+) is required as a cofactor.

Its subcellular location is the cytoplasm. The protein resides in the cytoskeleton. Its function is as follows. Tubulin is the major constituent of microtubules, a cylinder consisting of laterally associated linear protofilaments composed of alpha- and beta-tubulin heterodimers. Microtubules grow by the addition of GTP-tubulin dimers to the microtubule end, where a stabilizing cap forms. Below the cap, tubulin dimers are in GDP-bound state, owing to GTPase activity of alpha-tubulin. This is Tubulin beta-1 chain (betaTub56D) from Drosophila melanogaster (Fruit fly).